The sequence spans 370 residues: WAT1-related protein At1g44800 (370 aa).

10 helical membrane-spanning segments follow: residues 11 to 31, 41 to 61, 67 to 87, 102 to 122, 142 to 162, 182 to 202, 216 to 236, 252 to 272, 278 to 298, and 303 to 323; these read PILA…ITMV, VLAT…ALMF, PKMT…EPLM, SYTS…ALIF, VITV…IEIV, WVLG…FFIL, LVTL…LIMV, AAVY…SIVI, VFTT…GALV, and IHLG…SVVW. 2 EamA domains span residues 23 to 143 and 195 to 322; these read AGMY…GTVI and TWAA…YSVV.

The protein belongs to the drug/metabolite transporter (DMT) superfamily. Plant drug/metabolite exporter (P-DME) (TC 2.A.7.4) family.

The protein resides in the membrane. This chain is WAT1-related protein At1g44800, found in Arabidopsis thaliana (Mouse-ear cress).